The chain runs to 51 residues: Defensin-like protein 2A (51 aa).

Residue glutamine 1 is modified to Pyrrolidone carboxylic acid. Cystine bridges form between cysteine 4-cysteine 51, cysteine 15-cysteine 36, cysteine 21-cysteine 45, and cysteine 25-cysteine 47. The residue at position 8 (serine 8) is a Phosphoserine; by CPK.

Forms oligomers in its native state.

Its function is as follows. Possesses antifungal activity sensitive to inorganic cations. The polypeptide is Defensin-like protein 2A (Sinapis alba (White mustard)).